Consider the following 431-residue polypeptide: PHD finger-containing protein 1 (431 aa).

The segment at 7 to 59 (GPVCQTCGDIGFEEALVFCDSCMFESIHRYCLGITPIPFTEYITWICEDCDNS) adopts a PHD-type zinc-finger fold. 8 residues coordinate Zn(2+): Cys10, Cys13, Cys25, Cys28, His34, Cys37, Cys53, and Cys56. Residues 125–221 (EAADSSSVPD…QESSDSRKPH (97 aa)) are disordered. Polar residues predominate over residues 128-139 (DSSSVPDHSSCT). Residues 160–171 (KKKKKKKKKKSI) are compositionally biased toward basic residues. The segment covering 191-202 (VVEPVEVSSSSP) has biased composition (low complexity). Residues 205–221 (ETMESKRQESSDSRKPH) are compositionally biased toward basic and acidic residues.

As to quaternary structure, interacts directly with AIPP3/BDT1.

Its function is as follows. Together with AIPP3/BDT1, cooperates to form a BAH-PHD bivalent histone reader complex able to read histone H3 lysine 27 trimethylation (H3K27me3) histone marks in order to regulate transcription, especially to prevent early flowering; promotes AIPP3/BDT1 binding to H3K27me3. This chain is PHD finger-containing protein 1, found in Arabidopsis thaliana (Mouse-ear cress).